Consider the following 78-residue polypeptide: Sec-independent protein translocase protein TatA (78 aa).

A helical transmembrane segment spans residues 1–21 (MGGISIWQLLIIAVIVVLLFG). Residues 47-59 (ESEKKDADFEPKS) are compositionally biased toward basic and acidic residues. The disordered stretch occupies residues 47 to 78 (ESEKKDADFEPKSLEQQSKQAATESKKDKEQA). Polar residues predominate over residues 60–69 (LEQQSKQAAT).

This sequence belongs to the TatA/E family. In terms of assembly, the Tat system comprises two distinct complexes: a TatABC complex, containing multiple copies of TatA, TatB and TatC subunits, and a separate TatA complex, containing only TatA subunits. Substrates initially bind to the TatABC complex, which probably triggers association of the separate TatA complex to form the active translocon.

It localises to the cell inner membrane. In terms of biological role, part of the twin-arginine translocation (Tat) system that transports large folded proteins containing a characteristic twin-arginine motif in their signal peptide across membranes. TatA could form the protein-conducting channel of the Tat system. This Vibrio vulnificus (strain CMCP6) protein is Sec-independent protein translocase protein TatA.